The chain runs to 226 residues: ATP synthase F(0) complex subunit a (226 aa).

6 consecutive transmembrane segments (helical) span residues 6-26, 68-88, 97-117, 138-158, 164-184, and 189-209; these read FASF…IVLF, WALM…LGLL, QLSM…ITGF, IPML…ALAV, ITAG…LMSI, and ALIT…VAMI.

Belongs to the ATPase A chain family. As to quaternary structure, component of the ATP synthase complex composed at least of ATP5F1A/subunit alpha, ATP5F1B/subunit beta, ATP5MC1/subunit c (homooctomer), MT-ATP6/subunit a, MT-ATP8/subunit 8, ATP5ME/subunit e, ATP5MF/subunit f, ATP5MG/subunit g, ATP5MK/subunit k, ATP5MJ/subunit j, ATP5F1C/subunit gamma, ATP5F1D/subunit delta, ATP5F1E/subunit epsilon, ATP5PF/subunit F6, ATP5PB/subunit b, ATP5PD/subunit d, ATP5PO/subunit OSCP. ATP synthase complex consists of a soluble F(1) head domain (subunits alpha(3) and beta(3)) - the catalytic core - and a membrane F(0) domain - the membrane proton channel (subunits c, a, 8, e, f, g, k and j). These two domains are linked by a central stalk (subunits gamma, delta, and epsilon) rotating inside the F1 region and a stationary peripheral stalk (subunits F6, b, d, and OSCP). Interacts with DNAJC30; interaction is direct.

The protein localises to the mitochondrion inner membrane. It catalyses the reaction H(+)(in) = H(+)(out). In terms of biological role, subunit a, of the mitochondrial membrane ATP synthase complex (F(1)F(0) ATP synthase or Complex V) that produces ATP from ADP in the presence of a proton gradient across the membrane which is generated by electron transport complexes of the respiratory chain. ATP synthase complex consist of a soluble F(1) head domain - the catalytic core - and a membrane F(1) domain - the membrane proton channel. These two domains are linked by a central stalk rotating inside the F(1) region and a stationary peripheral stalk. During catalysis, ATP synthesis in the catalytic domain of F(1) is coupled via a rotary mechanism of the central stalk subunits to proton translocation. With the subunit c (ATP5MC1), forms the proton-conducting channel in the F(0) domain, that contains two crucial half-channels (inlet and outlet) that facilitate proton movement from the mitochondrial intermembrane space (IMS) into the matrix. Protons are taken up via the inlet half-channel and released through the outlet half-channel, following a Grotthuss mechanism. In Bos indicus (Zebu), this protein is ATP synthase F(0) complex subunit a.